Reading from the N-terminus, the 356-residue chain is tRNA N6-adenosine threonylcarbamoyltransferase (356 aa).

Positions 114 and 118 each coordinate Fe cation. Substrate-binding positions include Leu136 to Gly140, Asp169, Gly182, and Asn280. Asp308 is a binding site for Fe cation. The disordered stretch occupies residues Ala333–Ala356.

The protein belongs to the KAE1 / TsaD family. Fe(2+) serves as cofactor.

The protein localises to the cytoplasm. The catalysed reaction is L-threonylcarbamoyladenylate + adenosine(37) in tRNA = N(6)-L-threonylcarbamoyladenosine(37) in tRNA + AMP + H(+). Functionally, required for the formation of a threonylcarbamoyl group on adenosine at position 37 (t(6)A37) in tRNAs that read codons beginning with adenine. Is involved in the transfer of the threonylcarbamoyl moiety of threonylcarbamoyl-AMP (TC-AMP) to the N6 group of A37, together with TsaE and TsaB. TsaD likely plays a direct catalytic role in this reaction. The sequence is that of tRNA N6-adenosine threonylcarbamoyltransferase from Dinoroseobacter shibae (strain DSM 16493 / NCIMB 14021 / DFL 12).